The primary structure comprises 181 residues: MNPETLKFIEASIKTIPDYPKPGILFRDITSLIENAEAFKATIDLLAEHYRDQGITKIVGTEARGFIFGAPVAFAMGLGFVPVRKPGKLPRAVIEESYALEYGTDTLQLHTDAIVPGDKVLVVDDLLATGGTVDATVKLIRRAGGEVADAAFIISLPSLGGDARLTAAGIKVVSLVELAGE.

Belongs to the purine/pyrimidine phosphoribosyltransferase family. Homodimer.

The protein localises to the cytoplasm. It carries out the reaction AMP + diphosphate = 5-phospho-alpha-D-ribose 1-diphosphate + adenine. The protein operates within purine metabolism; AMP biosynthesis via salvage pathway; AMP from adenine: step 1/1. Its function is as follows. Catalyzes a salvage reaction resulting in the formation of AMP, that is energically less costly than de novo synthesis. This Aeromonas salmonicida (strain A449) protein is Adenine phosphoribosyltransferase.